Consider the following 417-residue polypeptide: Phosphoglycerate kinase 2 (417 aa).

Ser-2 carries the post-translational modification N-acetylserine. Phosphoserine is present on residues Ser-2 and Ser-4. At Lys-11 the chain carries N6-acetyllysine. (2R)-3-phosphoglycerate-binding residues include Val-23, Asp-24, Phe-25, Asn-26, Gln-38, and Arg-39. Lys-48 carries the N6-acetyllysine modification. (2R)-3-phosphoglycerate contacts are provided by Ser-62, His-63, Gly-65, and Arg-66. 3 positions are modified to N6-acetyllysine: Lys-75, Lys-86, and Lys-97. Residues Leu-122 and Arg-123 each contribute to the (2R)-3-phosphoglycerate site. N6-acetyllysine is present on residues Lys-131 and Lys-146. Residues His-170 and Arg-171 each coordinate (2R)-3-phosphoglycerate. A Phosphotyrosine modification is found at Tyr-196. The residue at position 199 (Lys-199) is an N6-acetyllysine. An ADP-binding site is contributed by Gly-214. Gly-214 is a CDP binding site. Ala-215 and Lys-216 together coordinate AMP. Ala-215 is a binding site for ATP. Ala-215 provides a ligand contact to Mg(2+). Residues Ala-218 and Asp-219 each coordinate Mg(2+). CDP is bound at residue Asp-219. Lys-220 is an AMP binding site. Lys-220 is a binding site for ATP. Gly-238 lines the ADP pocket. Gly-238 serves as a coordination point for CDP. Residue Gly-239 participates in AMP binding. Gly-239 is an ATP binding site. Residues Lys-267 and Lys-291 each carry the N6-acetyllysine modification. Gly-313 contacts AMP. Gly-313 provides a ligand contact to ATP. CDP contacts are provided by Gly-338, Val-340, and Phe-343. Phe-343 contributes to the ADP binding site. Glu-344 is an AMP binding site. The ATP site is built by Glu-344, Asp-375, and Thr-376. Asp-375 contributes to the Mg(2+) binding site.

Belongs to the phosphoglycerate kinase family. Monomer. The cofactor is Mg(2+).

It is found in the cytoplasm. It carries out the reaction (2R)-3-phosphoglycerate + ATP = (2R)-3-phospho-glyceroyl phosphate + ADP. The protein operates within carbohydrate degradation; glycolysis; pyruvate from D-glyceraldehyde 3-phosphate: step 2/5. Its function is as follows. Essential for sperm motility and male fertility but is not required for the completion of spermatogenesis. This is Phosphoglycerate kinase 2 (PGK2) from Equus caballus (Horse).